Here is a 581-residue protein sequence, read N- to C-terminus: Arginine--tRNA ligase (581 aa).

A 'HIGH' region motif is present at residues 126–136 (PNLAKEMHVGH).

The protein belongs to the class-I aminoacyl-tRNA synthetase family. As to quaternary structure, monomer.

The protein localises to the cytoplasm. It carries out the reaction tRNA(Arg) + L-arginine + ATP = L-arginyl-tRNA(Arg) + AMP + diphosphate. The sequence is that of Arginine--tRNA ligase from Shewanella pealeana (strain ATCC 700345 / ANG-SQ1).